The following is a 394-amino-acid chain: Chorismate synthase (394 aa).

NADP(+)-binding residues include Arg42 and Arg48. FMN is bound by residues 137 to 139, 258 to 259, Gly302, 317 to 321, and Arg343; these read RAS, QA, and KPIAT.

It belongs to the chorismate synthase family. Homotetramer. FMNH2 serves as cofactor.

The enzyme catalyses 5-O-(1-carboxyvinyl)-3-phosphoshikimate = chorismate + phosphate. It functions in the pathway metabolic intermediate biosynthesis; chorismate biosynthesis; chorismate from D-erythrose 4-phosphate and phosphoenolpyruvate: step 7/7. Functionally, catalyzes the anti-1,4-elimination of the C-3 phosphate and the C-6 proR hydrogen from 5-enolpyruvylshikimate-3-phosphate (EPSP) to yield chorismate, which is the branch point compound that serves as the starting substrate for the three terminal pathways of aromatic amino acid biosynthesis. This reaction introduces a second double bond into the aromatic ring system. The polypeptide is Chorismate synthase (Streptomyces coelicolor (strain ATCC BAA-471 / A3(2) / M145)).